We begin with the raw amino-acid sequence, 115 residues long: Phosphoribosyl-ATP pyrophosphatase (115 aa).

This sequence belongs to the PRA-PH family.

Its subcellular location is the cytoplasm. It catalyses the reaction 1-(5-phospho-beta-D-ribosyl)-ATP + H2O = 1-(5-phospho-beta-D-ribosyl)-5'-AMP + diphosphate + H(+). It participates in amino-acid biosynthesis; L-histidine biosynthesis; L-histidine from 5-phospho-alpha-D-ribose 1-diphosphate: step 2/9. This chain is Phosphoribosyl-ATP pyrophosphatase, found in Bordetella bronchiseptica (strain ATCC BAA-588 / NCTC 13252 / RB50) (Alcaligenes bronchisepticus).